The sequence spans 369 residues: Phosphoserine aminotransferase (369 aa).

Arginine 42 is a binding site for L-glutamate. 4 residues coordinate pyridoxal 5'-phosphate: tryptophan 101, threonine 152, aspartate 176, and glutamine 199. Lysine 200 is modified (N6-(pyridoxal phosphate)lysine). Residue 241–242 coordinates pyridoxal 5'-phosphate; it reads NT.

Belongs to the class-V pyridoxal-phosphate-dependent aminotransferase family. SerC subfamily. In terms of assembly, homodimer. Pyridoxal 5'-phosphate is required as a cofactor.

The protein resides in the cytoplasm. It catalyses the reaction O-phospho-L-serine + 2-oxoglutarate = 3-phosphooxypyruvate + L-glutamate. The catalysed reaction is 4-(phosphooxy)-L-threonine + 2-oxoglutarate = (R)-3-hydroxy-2-oxo-4-phosphooxybutanoate + L-glutamate. Its pathway is amino-acid biosynthesis; L-serine biosynthesis; L-serine from 3-phospho-D-glycerate: step 2/3. The protein operates within cofactor biosynthesis; pyridoxine 5'-phosphate biosynthesis; pyridoxine 5'-phosphate from D-erythrose 4-phosphate: step 3/5. Functionally, catalyzes the reversible conversion of 3-phosphohydroxypyruvate to phosphoserine and of 3-hydroxy-2-oxo-4-phosphonooxybutanoate to phosphohydroxythreonine. This chain is Phosphoserine aminotransferase, found in Delftia acidovorans (strain DSM 14801 / SPH-1).